Here is a 356-residue protein sequence, read N- to C-terminus: Tyrosine recombinase XerS (356 aa).

The 106-residue stretch at isoleucine 16–threonine 121 folds into the Core-binding (CB) domain. One can recognise a Tyr recombinase domain in the interval alanine 169–aspartate 354. Active-site residues include arginine 210, lysine 234, histidine 306, arginine 309, and histidine 332. Residue tyrosine 341 is the O-(3'-phospho-DNA)-tyrosine intermediate of the active site.

The protein belongs to the 'phage' integrase family. XerS subfamily.

It localises to the cytoplasm. With respect to regulation, ftsK is required for recombination. Site-specific tyrosine recombinase, which acts by catalyzing the cutting and rejoining of the recombining DNA molecules. Essential to convert dimers of the bacterial chromosome into monomers to permit their segregation at cell division. This is Tyrosine recombinase XerS from Streptococcus equi subsp. zooepidemicus (strain H70).